Here is a 286-residue protein sequence, read N- to C-terminus: Gap junction alpha-6 protein (286 aa).

Residues M1–K23 lie on the Cytoplasmic side of the membrane. A helical transmembrane segment spans residues V24 to I41. Residues E42–R76 lie on the Extracellular side of the membrane. The chain crosses the membrane as a helical span at residues L77–V99. Residues I100–R151 lie on the Cytoplasmic side of the membrane. A helical transmembrane segment spans residues L152–Q174. Topologically, residues W175–I209 are extracellular. The helical transmembrane segment at F210–V232 threads the bilayer. Over L233–M286 the chain is Cytoplasmic.

Belongs to the connexin family. Alpha-type (group II) subfamily. In terms of assembly, a connexon is composed of a hexamer of connexins. As to expression, expressed in testis.

The protein resides in the cell membrane. It is found in the cell junction. The protein localises to the gap junction. In terms of biological role, one gap junction consists of a cluster of closely packed pairs of transmembrane channels, the connexons, through which materials of low MW diffuse from one cell to a neighboring cell. This chain is Gap junction alpha-6 protein (Gja6), found in Rattus norvegicus (Rat).